Here is a 74-residue protein sequence, read N- to C-terminus: Peptide BmKa2 (74 aa).

The signal sequence occupies residues 1–24; it reads MSSKTLLVLLLVGVLVSTFFTADA.

This sequence belongs to the non-disulfide-bridged peptide (NDBP) superfamily. Long chain multifunctional peptide (group 2) family. In terms of tissue distribution, expressed by the venom gland.

It localises to the secreted. Its function is as follows. Highly acidic peptide that may have antibacterial activity. This is Peptide BmKa2 from Olivierus martensii (Manchurian scorpion).